Reading from the N-terminus, the 117-residue chain is uncharacterized protein (117 aa).

4 helical membrane passes run 3-23 (AVPI…NILL), 40-60 (FLTP…LLFA), 66-86 (LEVS…LIIA), and 94-114 (PFHL…IFLA).

This sequence to E.coli and S.aureus ethidium bromide resistance proteins (ebr/QacC/EmrE/MvrC).

It localises to the cell membrane. This is an uncharacterized protein from Sinorhizobium fredii (strain NBRC 101917 / NGR234).